Consider the following 1193-residue polypeptide: Tubulin monoglutamylase TTLL4 (1193 aa).

Disordered stretches follow at residues 1 to 37 and 468 to 535; these read MASAGTEHYSIGLRRGNSFKQRHPSGTVSASPSEKPS and VHLD…CSSL. A compositionally biased stretch (polar residues) spans 24 to 34; that stretch reads PSGTVSASPSE. Over residues 472-482 the composition is skewed to basic and acidic residues; it reads QPGKEPEEAKD. Over residues 502–515 the composition is skewed to acidic residues; that stretch reads EPEDTEDELGDGLE. The 344-residue stretch at 599–942 folds into the TTL domain; the sequence is RRLLRWKMST…VLPNMEDIIS (344 aa). Phosphoserine is present on S686. Residues K716, 722–723, 744–747, and 757–759 each bind ATP; these read RG, QRYL, and KFD. R722 provides a ligand contact to a protein. R783 contributes to the L-glutamate binding site. An ATP-binding site is contributed by 804–805; that stretch reads TN. Y806, S807, and K828 together coordinate L-glutamate. D888, E901, and N903 together coordinate Mg(2+). Residues 913–1027 form a c-MTBD region region; the sequence is PLDISIKGQM…RGQFERIFPS (115 aa). K919 is an L-glutamate binding site. Low complexity predominate over residues 943 to 960; that stretch reads SSSSPSSSSGSSTSLPSS. 2 disordered regions span residues 943 to 966 and 1092 to 1193; these read SSSSPSSSSGSSTSLPSSPRDKCQ and MTTS…AVSS. Polar residues-rich tracts occupy residues 1092 to 1102 and 1131 to 1153; these read MTTSKGDGTPN and SQAGLSPISRKTLSSRSNENTSK. Over residues 1168 to 1182 the composition is skewed to low complexity; sequence SGQSSRLSAASASQS. Residues 1183–1193 show a composition bias toward polar residues; it reads VTDSRLTAVSS.

This sequence belongs to the tubulin--tyrosine ligase family. Mg(2+) serves as cofactor. As to expression, highly expressed in testis. Expressed in brain, heart, kidney, liver, lung, muscle and spleen. In the brain, expressed in ependymal cilia, the cortex and the striatum. Expressed in blastomere.

It localises to the cytoplasm. It is found in the cell projection. Its subcellular location is the cilium. The protein resides in the cytoskeleton. The protein localises to the cilium basal body. It catalyses the reaction L-glutamyl-[protein] + L-glutamate + ATP = gamma-L-glutamyl-L-glutamyl-[protein] + ADP + phosphate + H(+). Functionally, monoglutamylase which modifies both tubulin and non-tubulin proteins, adding a single glutamate on the gamma-carboxyl group of specific glutamate residues of target proteins. Involved in the side-chain initiation step of the polyglutamylation reaction but not in the elongation step. Preferentially modifies beta-tail tubulin over the alpha-tubulin. Monoglutamylates nucleosome assembly proteins NAP1L1 and NAP1L4. Monoglutamylates nucleotidyltransferase CGAS, leading to inhibition of CGAS catalytic activity, thereby preventing antiviral defense function. Involved in KLF4 glutamylation which impedes its ubiquitination, thereby leading to somatic cell reprogramming, pluripotency maintenance and embryogenesis. This Mus musculus (Mouse) protein is Tubulin monoglutamylase TTLL4.